The chain runs to 704 residues: Pentatricopeptide repeat-containing protein At1g56690, mitochondrial (704 aa).

The N-terminal 12 residues, 1 to 12, are a transit peptide targeting the mitochondrion; it reads MKRLKLILRRTY. PPR repeat units lie at residues 16–46, 47–81, 82–108, 109–143, 144–170, 171–205, 206–232, 233–267, 268–294, 295–329, 330–364, 365–395, 396–430, 431–465, and 467–497; these read TGVN…LQFK, AIGS…NVVS, WNGL…MPER, NVVS…NEVS, WTVM…MPVK, DVVA…NVVT, WTTM…MPEK, TEVS…PVIA, CNAM…MEDR, DNAT…GVRP, SFPS…QFDD, DVYV…FSSK, DIIM…GTMP, NKVT…FCVT, and TVEH…MTIK. A type E motif region spans residues 502–577; that stretch reads VWGALLGACK…FPGCSWIEVG (76 aa). The type E(+) motif stretch occupies residues 578–609; the sequence is KKVHMFTRGGIKNHPEQAMILMMLEKTDGLLR. Positions 610–704 are type DYW motif; sequence EAGYSPDCSH…NGECSCRDYW (95 aa).

The protein belongs to the PPR family. PCMP-H subfamily.

The protein resides in the mitochondrion. The chain is Pentatricopeptide repeat-containing protein At1g56690, mitochondrial (PCMP-H69) from Arabidopsis thaliana (Mouse-ear cress).